Consider the following 112-residue polypeptide: Large ribosomal subunit protein uL22 (112 aa).

The protein belongs to the universal ribosomal protein uL22 family. Part of the 50S ribosomal subunit.

This protein binds specifically to 23S rRNA; its binding is stimulated by other ribosomal proteins, e.g. L4, L17, and L20. It is important during the early stages of 50S assembly. It makes multiple contacts with different domains of the 23S rRNA in the assembled 50S subunit and ribosome. Its function is as follows. The globular domain of the protein is located near the polypeptide exit tunnel on the outside of the subunit, while an extended beta-hairpin is found that lines the wall of the exit tunnel in the center of the 70S ribosome. This chain is Large ribosomal subunit protein uL22, found in Anaplasma marginale (strain Florida).